A 210-amino-acid polypeptide reads, in one-letter code: MADS-box protein AeAP3-2 (210 aa).

Positions 1–36 constitute an MADS-box domain; the sequence is GGLLKKARELAILCDAQLGVIIFSSSGKMFEFSSPP. In terms of domain architecture, K-box spans 59–149; sequence NQQVYCEITR…YRVIQDHHAA (91 aa).

As to expression, expressed exclusively in the carpel.

Its subcellular location is the nucleus. Functionally, probable transcription factor. The chain is MADS-box protein AeAP3-2 (AP3-2) from Asarum europaeum (Asarabacca).